The following is a 220-amino-acid chain: Uracil-DNA glycosylase (220 aa).

The active-site Proton acceptor is aspartate 65.

This sequence belongs to the uracil-DNA glycosylase (UDG) superfamily. UNG family.

The protein resides in the cytoplasm. It catalyses the reaction Hydrolyzes single-stranded DNA or mismatched double-stranded DNA and polynucleotides, releasing free uracil.. In terms of biological role, excises uracil residues from the DNA which can arise as a result of misincorporation of dUMP residues by DNA polymerase or due to deamination of cytosine. The protein is Uracil-DNA glycosylase of Amoebophilus asiaticus (strain 5a2).